A 180-amino-acid polypeptide reads, in one-letter code: Pro-glucagon (180 aa).

An N-terminal signal peptide occupies residues 1 to 20; it reads MKSVYFVAGLFIMLAQGSWQ. The interval 23–58 is disordered; the sequence is LQDTEEKPRSVSASQTDMLDDPDQMNEDKRHSQGTF. At serine 54 the chain carries Phosphoserine. Residues 84-89 constitute a propeptide that is removed on maturation; sequence NRNNIA. 2 positions are modified to phosphoserine: serine 105 and serine 108. Arginine 127 bears the Arginine amide mark. A propeptide spanning residues 131–145 is cleaved from the precursor; that stretch reads DFPEEVAIVEELGRR. Phosphoserine occurs at positions 150 and 152.

Belongs to the glucagon family. Post-translationally, proglucagon is post-translationally processed in a tissue-specific manner in pancreatic A cells and intestinal L cells. In pancreatic A cells, the major bioactive hormone is glucagon cleaved by PCSK2/PC2. In the intestinal L cells PCSK1/PC1 liberates GLP-1, GLP-2, glicentin and oxyntomodulin. GLP-1 is further N-terminally truncated by post-translational processing in the intestinal L cells resulting in GLP-1(7-37) GLP-1-(7-36)amide. The C-terminal amidation is neither important for the metabolism of GLP-1 nor for its effects on the endocrine pancreas.

It is found in the secreted. Functionally, plays a key role in glucose metabolism and homeostasis. Regulates blood glucose by increasing gluconeogenesis and decreasing glycolysis. A counterregulatory hormone of insulin, raises plasma glucose levels in response to insulin-induced hypoglycemia. Plays an important role in initiating and maintaining hyperglycemic conditions in diabetes. Potent stimulator of glucose-dependent insulin release. Also stimulates insulin release in response to IL6. Plays important roles on gastric motility and the suppression of plasma glucagon levels. May be involved in the suppression of satiety and stimulation of glucose disposal in peripheral tissues, independent of the actions of insulin. Has growth-promoting activities on intestinal epithelium. May also regulate the hypothalamic pituitary axis (HPA) via effects on LH, TSH, CRH, oxytocin, and vasopressin secretion. Increases islet mass through stimulation of islet neogenesis and pancreatic beta cell proliferation. Inhibits beta cell apoptosis. In terms of biological role, stimulates intestinal growth and up-regulates villus height in the small intestine, concomitant with increased crypt cell proliferation and decreased enterocyte apoptosis. The gastrointestinal tract, from the stomach to the colon is the principal target for GLP-2 action. Plays a key role in nutrient homeostasis, enhancing nutrient assimilation through enhanced gastrointestinal function, as well as increasing nutrient disposal. Stimulates intestinal glucose transport and decreases mucosal permeability. Its function is as follows. Significantly reduces food intake. Inhibits gastric emptying in humans. Suppression of gastric emptying may lead to increased gastric distension, which may contribute to satiety by causing a sensation of fullness. Functionally, may modulate gastric acid secretion and the gastro-pyloro-duodenal activity. May play an important role in intestinal mucosal growth in the early period of life. The protein is Pro-glucagon (GCG) of Cavia porcellus (Guinea pig).